Reading from the N-terminus, the 239-residue chain is Large ribosomal subunit protein uL1 (239 aa).

The protein belongs to the universal ribosomal protein uL1 family. As to quaternary structure, part of the 50S ribosomal subunit.

Its function is as follows. Binds directly to 23S rRNA. The L1 stalk is quite mobile in the ribosome, and is involved in E site tRNA release. Protein L1 is also a translational repressor protein, it controls the translation of the L11 operon by binding to its mRNA. This chain is Large ribosomal subunit protein uL1, found in Mycolicibacterium gilvum (strain PYR-GCK) (Mycobacterium gilvum (strain PYR-GCK)).